The sequence spans 184 residues: ATP synthase subunit b, chloroplastic (184 aa).

The chain crosses the membrane as a helical span at residues 27–49 (LATNPINLSVVLGVLIFFGKGVL).

This sequence belongs to the ATPase B chain family. In terms of assembly, F-type ATPases have 2 components, F(1) - the catalytic core - and F(0) - the membrane proton channel. F(1) has five subunits: alpha(3), beta(3), gamma(1), delta(1), epsilon(1). F(0) has four main subunits: a(1), b(1), b'(1) and c(10-14). The alpha and beta chains form an alternating ring which encloses part of the gamma chain. F(1) is attached to F(0) by a central stalk formed by the gamma and epsilon chains, while a peripheral stalk is formed by the delta, b and b' chains.

The protein localises to the plastid. It localises to the chloroplast thylakoid membrane. F(1)F(0) ATP synthase produces ATP from ADP in the presence of a proton or sodium gradient. F-type ATPases consist of two structural domains, F(1) containing the extramembraneous catalytic core and F(0) containing the membrane proton channel, linked together by a central stalk and a peripheral stalk. During catalysis, ATP synthesis in the catalytic domain of F(1) is coupled via a rotary mechanism of the central stalk subunits to proton translocation. Functionally, component of the F(0) channel, it forms part of the peripheral stalk, linking F(1) to F(0). This is ATP synthase subunit b, chloroplastic from Nicotiana sylvestris (Wood tobacco).